The chain runs to 190 residues: Biphenyl-2,3-diol 1,2-dioxygenase 2 (190 aa).

Residues 6-124 (KFAHVVLQTS…DGNFVELQID (119 aa)) enclose the VOC domain. 3 residues coordinate Fe cation: His9, His72, and Glu120.

This sequence belongs to the extradiol ring-cleavage dioxygenase family. Homohexamer. The cofactor is Fe(2+).

The catalysed reaction is biphenyl-2,3-diol + O2 = 2-hydroxy-6-oxo-6-phenylhexa-2,4-dienoate + H(+). Its pathway is xenobiotic degradation; biphenyl degradation; 2-hydroxy-2,4-pentadienoate and benzoate from biphenyl: step 3/4. The sequence is that of Biphenyl-2,3-diol 1,2-dioxygenase 2 (bphC2) from Rhodococcus globerulus.